A 197-amino-acid chain; its full sequence is Scoloptoxin SSD20 (197 aa).

The first 6 residues, 1 to 6 (PPMTTE), serve as a signal peptide directing secretion.

Expressed by the venom gland.

The protein localises to the secreted. May act as a voltage-gated potassium channel inhibitor. Is highly similar to the subunit beta of SSD14 which, when complexed with subunit alpha, induces platelet aggregation and hemolysis. This is Scoloptoxin SSD20 from Scolopendra dehaani (Thai centipede).